The following is a 254-amino-acid chain: MGVAVRVIPCLDVAAGRVVKGVNFQNLRDQGDPVEFARRYAEQGADELTFLDVTATVDDRSTTYDVVRATAGQVFIPLTVGGGVRSTEDVARLLGSGADKVGVNSAAIARPGLVAEIADRFGAQVLVLSLDVKRSASTDSGFAVTTHGGRTETGLDALEWAARAIELGAGELLVNSIDADGTKEGFDLELIREMRALSAVPVIASGGAGKTADFAPALRAGADAVLAASVFHSGELTIGDVKTALAAAGMEVRP.

Active-site residues include D12 and D131.

Belongs to the HisA/HisF family. In terms of assembly, heterodimer of HisH and HisF.

The protein localises to the cytoplasm. It catalyses the reaction 5-[(5-phospho-1-deoxy-D-ribulos-1-ylimino)methylamino]-1-(5-phospho-beta-D-ribosyl)imidazole-4-carboxamide + L-glutamine = D-erythro-1-(imidazol-4-yl)glycerol 3-phosphate + 5-amino-1-(5-phospho-beta-D-ribosyl)imidazole-4-carboxamide + L-glutamate + H(+). Its pathway is amino-acid biosynthesis; L-histidine biosynthesis; L-histidine from 5-phospho-alpha-D-ribose 1-diphosphate: step 5/9. Its function is as follows. IGPS catalyzes the conversion of PRFAR and glutamine to IGP, AICAR and glutamate. The HisF subunit catalyzes the cyclization activity that produces IGP and AICAR from PRFAR using the ammonia provided by the HisH subunit. In Leifsonia xyli subsp. xyli (strain CTCB07), this protein is Imidazole glycerol phosphate synthase subunit HisF.